The sequence spans 136 residues: Ribosome-binding factor A (136 aa).

Positions 114-136 are disordered; the sequence is DRANRPGPAADEPDEPDEPEDRR. The span at 124-136 shows a compositional bias: acidic residues; it reads DEPDEPDEPEDRR.

The protein belongs to the RbfA family. Monomer. Binds 30S ribosomal subunits, but not 50S ribosomal subunits or 70S ribosomes.

Its subcellular location is the cytoplasm. In terms of biological role, one of several proteins that assist in the late maturation steps of the functional core of the 30S ribosomal subunit. Associates with free 30S ribosomal subunits (but not with 30S subunits that are part of 70S ribosomes or polysomes). Required for efficient processing of 16S rRNA. May interact with the 5'-terminal helix region of 16S rRNA. This chain is Ribosome-binding factor A, found in Bordetella petrii (strain ATCC BAA-461 / DSM 12804 / CCUG 43448).